Consider the following 267-residue polypeptide: 7alpha-hydroxysteroid dehydrogenase (267 aa).

Residues 13 to 18 (SATRGI), R38, 63 to 64 (DA), and N90 each bind NADP(+). 2 residues coordinate cholate: S145 and Y158. NADP(+)-binding positions include Y158, K162, and 191–195 (IATDA). Y158 functions as the Proton acceptor in the catalytic mechanism.

The protein belongs to the short-chain dehydrogenases/reductases (SDR) family. In terms of assembly, homotetramer.

It catalyses the reaction cholate + NADP(+) = 3alpha,12alpha-dihydroxy-7-oxo-5beta-cholanate + NADPH + H(+). It carries out the reaction chenodeoxycholate + NADP(+) = 7-oxolithocholate + NADPH + H(+). In terms of biological role, 7alpha-hydroxysteroid dehydrogenase that catalyzes the NADP(+)-dependent oxidation of the 7alpha-hydroxy group of 7alpha-hydroxysteroids, such as the major human bile acids cholate and chenodeoxycholate, to the corresponding 7-oxosteroids. Is thus liley involved in the metabolism of primary bile acids. The protein is 7alpha-hydroxysteroid dehydrogenase of Paraclostridium sordellii (Clostridium sordellii).